The primary structure comprises 156 residues: Small ribosomal subunit protein uS7 (156 aa).

The protein belongs to the universal ribosomal protein uS7 family. As to quaternary structure, part of the 30S ribosomal subunit. Contacts proteins S9 and S11.

Functionally, one of the primary rRNA binding proteins, it binds directly to 16S rRNA where it nucleates assembly of the head domain of the 30S subunit. Is located at the subunit interface close to the decoding center, probably blocks exit of the E-site tRNA. This is Small ribosomal subunit protein uS7 from Geobacter metallireducens (strain ATCC 53774 / DSM 7210 / GS-15).